The chain runs to 2813 residues: von Willebrand factor (2813 aa).

Residues 1 to 22 (MIPARFAGVLLALALILPGTLC) form the signal peptide. Residues 33–201 (ARCSLFGSDF…ALSSGEQWCE (169 aa)) enclose the VWFD 1 domain. 2 disulfides stabilise this stretch: Cys-35-Cys-162 and Cys-57-Cys-200. Asn-99, Asn-156, and Asn-211 each carry an N-linked (GlcNAc...) asparagine glycan. Positions 295–348 (CPAGMEYRQCVSPCARTCQSLHINEMCQERCVDGCSCPEGQLLDEGLCVESTEC) constitute a TIL 1 domain. A VWFD 2 domain is found at 386 to 560 (GECLVTGQSH…NAWKLHGDCQ (175 aa)). Cystine bridges form between Cys-388–Cys-524, Cys-410–Cys-559, and Cys-432–Cys-440. TIL domains follow at residues 652–707 (CPKG…KAQC) and 776–827 (CPAD…LERC). Asn-666 is a glycosylation site (N-linked (GlcNAc...) asparagine). The interval 764–787 (SLSCRPPMVKLVCPADNLRAEGLE) is amino-terminal. Cystine bridges form between Cys-767–Cys-808, Cys-776–Cys-804, and Cys-810–Cys-821. The segment at 788–833 (CTKTCQNYDLECMSMGCVSGCLCPPGMVRHENRCVALERCPCFHQG) is E1. Residues 826–853 (RCPCFHQGKEYAPGETVKIGCNTCVCQD) are CX. An N-linked (GlcNAc...) asparagine glycan is attached at Asn-857. Residues 865–1032 (ATCSTIGMAH…NSWKVSSQCA (168 aa)) form the VWFD 3 domain. Disulfide bonds link Cys-867-Cys-996, Cys-889-Cys-1031, Cys-898-Cys-993, Cys-914-Cys-921, Cys-1060-Cys-1084, Cys-1071-Cys-1111, Cys-1089-Cys-1091, and Cys-1126-Cys-1130. In terms of domain architecture, TIL 4 spans 1146-1196 (YNSCAPACQVTCQHPEPLACPVQCVEGCHAHCPPGKILDELLQTCVDPEDC). Asn-1147 carries N-linked (GlcNAc...) asparagine; atypical glycosylation. Disulfide bonds link Cys-1149-Cys-1169, Cys-1153-Cys-1165, and Cys-1196-Cys-1199. The N-linked (GlcNAc...) asparagine glycan is linked to Asn-1231. A disulfide bridge connects residues Cys-1234 and Cys-1237. Residues Thr-1248, Thr-1255, and Thr-1256 are each glycosylated (O-linked (GalNAc...) threonine). The O-linked (GalNAc...) serine glycan is linked to Ser-1263. A disulfide bridge links Cys-1272 with Cys-1458. Residues 1277 to 1453 (DLVFLLDGSS…DELEQQRDEI (177 aa)) form the VWFA 1; binding site for platelet glycoprotein Ib domain. 2 O-linked (GalNAc...) threonine glycosylation sites follow: Thr-1468 and Thr-1477. Ser-1486 is a glycosylation site (O-linked (GalNAc...) serine). Thr-1487 is a glycosylation site (O-linked (GalNAc...) threonine). A VWFA 2 domain is found at 1498–1665 (DVAFVLEGSD…TLPREAPDLV (168 aa)). Residue Asn-1515 is glycosylated (N-linked (GlcNAc...) (complex) asparagine). Asn-1574 carries N-linked (GlcNAc...) asparagine glycosylation. Cys-1669 and Cys-1670 are disulfide-bonded. O-linked (GalNAc...) threonine glycosylation is present at Thr-1679. Disulfide bonds link Cys-1686-Cys-1872, Cys-1879-Cys-1904, Cys-1899-Cys-1940, Cys-1927-Cys-2088, Cys-1950-Cys-2085, Cys-1972-Cys-2123, and Cys-1993-Cys-2001. A VWFA 3; main binding site for collagens type I and III domain is found at 1691–1871 (DVILLLDGSS…TLGNSFLHKL (181 aa)). In terms of domain architecture, VWFD 4 spans 1948 to 2124 (CVCTGSSTRH…TVQRPGQTCQ (177 aa)). Residues 2216–2261 (CPRHCDGNVSSCGDHPSEGCFCPPDKVMLEGSCVPEEACTQCIGED) form an E2 region. N-linked (GlcNAc...) asparagine glycans are attached at residues Asn-2223 and Asn-2290. The region spanning 2255–2328 (TQCIGEDGVQ…CCPEYECVCD (74 aa)) is the VWFC 1 domain. Thr-2298 carries an O-linked (GalNAc...) threonine glycan. Asn-2357 and Asn-2400 each carry an N-linked (GlcNAc...) asparagine glycan. The VWFC 2 domain occupies 2429-2495 (KVCVHRSTIY…HEGECCGRCL (67 aa)). Positions 2507-2509 (RGD) match the Cell attachment site motif. 2 N-linked (GlcNAc...) asparagine glycosylation sites follow: Asn-2546 and Asn-2585. The 66-residue stretch at 2580 to 2645 (EACMLNGTVI…NTGECCGRCL (66 aa)) folds into the VWFC 3 domain. 4 disulfide bridges follow: Cys-2724–Cys-2774, Cys-2739–Cys-2788, Cys-2750–Cys-2804, and Cys-2754–Cys-2806. A CTCK domain is found at 2724–2812 (CNDITARLQY…ECKCSPRKCS (89 aa)). Residue Asn-2790 is glycosylated (N-linked (GlcNAc...) asparagine).

In terms of assembly, multimeric. Interacts with F8. Post-translationally, all cysteine residues are involved in intrachain or interchain disulfide bonds. N- and O-glycosylated. As to expression, plasma.

The protein resides in the secreted. It is found in the extracellular space. Its subcellular location is the extracellular matrix. Functionally, important in the maintenance of hemostasis, it promotes adhesion of platelets to the sites of vascular injury by forming a molecular bridge between sub-endothelial collagen matrix and platelet-surface receptor complex GPIb-IX-V. Also acts as a chaperone for coagulation factor VIII, delivering it to the site of injury, stabilizing its heterodimeric structure and protecting it from premature clearance from plasma. The polypeptide is von Willebrand factor (VWF) (Homo sapiens (Human)).